A 901-amino-acid polypeptide reads, in one-letter code: HTH-type transcriptional regulator MalT (901 aa).

39-46 (SPAGYGKT) contributes to the ATP binding site. One can recognise an HTH luxR-type domain in the interval 829–894 (ELIRTSPLTQ…DAVQHAQQLL (66 aa)). The segment at residues 853 to 872 (NEQIAGELDVAATTIKTHIR) is a DNA-binding region (H-T-H motif).

Belongs to the MalT family. In terms of assembly, monomer in solution. Oligomerizes to an active state in the presence of the positive effectors ATP and maltotriose.

With respect to regulation, activated by ATP and maltotriose, which are both required for DNA binding. Functionally, positively regulates the transcription of the maltose regulon whose gene products are responsible for uptake and catabolism of malto-oligosaccharides. Specifically binds to the promoter region of its target genes, recognizing a short DNA motif called the MalT box. In Klebsiella pneumoniae (strain 342), this protein is HTH-type transcriptional regulator MalT.